The chain runs to 78 residues: ATP synthase subunit a (78 aa).

A run of 3 helical transmembrane segments spans residues 13-33 (LFGNVYAKEMLMILLVGLGTS), 35-55 (FLGAFGAFLPLIVWQAFGMFI), and 57-77 (SLQAFIFAMLAMVYMAHKVEA).

It belongs to the ATPase A chain family. As to quaternary structure, F-type ATPases have 2 components, CF(1) - the catalytic core - and CF(0) - the membrane proton channel. CF(1) has five subunits: alpha(3), beta(3), gamma(1), delta(1), epsilon(1). CF(0) has three main subunits: a(1), b(2) and c(9-12). The alpha and beta chains form an alternating ring which encloses part of the gamma chain. CF(1) is attached to CF(0) by a central stalk formed by the gamma and epsilon chains, while a peripheral stalk is formed by the delta and b chains.

The protein localises to the cell membrane. Functionally, key component of the proton channel; it plays a direct role in the translocation of protons across the membrane. The protein is ATP synthase subunit a (atpB) of Alkalihalobacillus alcalophilus (Bacillus alcalophilus).